The following is a 276-amino-acid chain: Lectin-like protein At3g16530 (276 aa).

The signal sequence occupies residues 1–19 (MQIHKLCFLVLFLANAAFA). The interval 20–270 (VKFNFDSFDG…RHDIWSWSFE (251 aa)) is legume-lectin like. N-linked (GlcNAc...) asparagine glycosylation is found at Asn79, Asn129, and Asn196.

Belongs to the leguminous lectin family.

It is found in the secreted. Its subcellular location is the extracellular space. The protein resides in the apoplast. This is Lectin-like protein At3g16530 from Arabidopsis thaliana (Mouse-ear cress).